A 507-amino-acid polypeptide reads, in one-letter code: Probable cytochrome P450 6a18 (507 aa).

A heme-binding site is contributed by Cys451.

This sequence belongs to the cytochrome P450 family. The cofactor is heme.

It localises to the endoplasmic reticulum membrane. It is found in the microsome membrane. Its function is as follows. May be involved in the metabolism of insect hormones and in the breakdown of synthetic insecticides. This chain is Probable cytochrome P450 6a18 (Cyp6a18), found in Drosophila melanogaster (Fruit fly).